The chain runs to 377 residues: uncharacterized protein (377 aa).

The next 2 membrane-spanning stretches (helical) occupy residues Leu23–Tyr43 and Gly251–Tyr271.

It is found in the cell membrane. This is an uncharacterized protein from Methanocaldococcus jannaschii (strain ATCC 43067 / DSM 2661 / JAL-1 / JCM 10045 / NBRC 100440) (Methanococcus jannaschii).